The primary structure comprises 146 residues: UPF0178 protein BCAH820_3075 (146 aa).

The protein belongs to the UPF0178 family.

The polypeptide is UPF0178 protein BCAH820_3075 (Bacillus cereus (strain AH820)).